We begin with the raw amino-acid sequence, 689 residues long: Beta-adrenergic receptor kinase 1 (689 aa).

Residues 1–190 are N-terminal; the sequence is MADLEAVLAD…ELNIHLTMND (190 aa). Residues 54–175 enclose the RGS domain; the sequence is TFEKIFSQKL…IESDKFTRFC (122 aa). Residues 191–453 form the Protein kinase domain; the sequence is FSVHRIIGRG…AQEIKESPFF (263 aa). ATP-binding positions include 197–205 and Lys-220; that span reads IGRGGFGEV. Asp-317 (proton acceptor) is an active-site residue. In terms of domain architecture, AGC-kinase C-terminal spans 454–521; the sequence is RSLDWQMVFL…TISERWQQEV (68 aa). The PH domain occupies 558 to 652; sequence DCIMHGYMSK…WKKELRDAYR (95 aa). Position 670 is a phosphoserine (Ser-670).

It belongs to the protein kinase superfamily. AGC Ser/Thr protein kinase family. GPRK subfamily. In terms of assembly, interacts with the heterodimer formed by GNB1 and GNG2. Interacts with GIT1. Interacts with, and phosphorylates chemokine-stimulated CCR5. Interacts with ARRB1. Interacts with LPAR1 and LPAR2. Interacts with RALA in response to LPAR1 activation. ADRBK1 and RALA mutually inhibit each other's binding to LPAR1. Interacts with ADRB2. In terms of tissue distribution, expressed at low levels in brain cortex, hippocampus, striatum, hypothalamus, cerebellum and brainstem (at protein level).

The protein localises to the cytoplasm. Its subcellular location is the cell membrane. It localises to the postsynapse. The protein resides in the presynapse. It catalyses the reaction [beta-adrenergic receptor] + ATP = [beta-adrenergic receptor]-phosphate + ADP + H(+). In contrast to other AGC family kinases, the catalytic activity is solely regulated by the binding of substrates and ligands, not by phosphorylation of the kinase domain. Its function is as follows. Specifically phosphorylates the agonist-occupied form of the beta-adrenergic and closely related receptors, probably inducing a desensitization of them. Key regulator of LPAR1 signaling. Competes with RALA for binding to LPAR1 thus affecting the signaling properties of the receptor. Desensitizes LPAR1 and LPAR2 in a phosphorylation-independent manner. Positively regulates ciliary smoothened (SMO)-dependent Hedgehog (Hh) signaling pathway by facilitating the trafficking of SMO into the cilium and the stimulation of SMO activity. Inhibits relaxation of airway smooth muscle in response to blue light. The chain is Beta-adrenergic receptor kinase 1 from Rattus norvegicus (Rat).